We begin with the raw amino-acid sequence, 492 residues long: Beta-Ala-His dipeptidase (492 aa).

His107 contributes to the Zn(2+) binding site. Asp109 is a catalytic residue. Asp140 contributes to the Zn(2+) binding site. The active-site Proton acceptor is the Glu174. Residue Glu175 coordinates Zn(2+). Phosphoserine is present on Ser194. Residues Asp203 and His453 each contribute to the Zn(2+) site.

The protein belongs to the peptidase M20A family. As to quaternary structure, homodimer. Zn(2+) is required as a cofactor. Detected exclusively in kidney.

It is found in the secreted. The catalysed reaction is Preferential hydrolysis of the beta-Ala-|-His dipeptide (carnosine), and also anserine, Xaa-|-His dipeptides and other dipeptides including homocarnosine.. It carries out the reaction carnosine + H2O = beta-alanine + L-histidine. It catalyses the reaction anserine + H2O = N(pros)-methyl-L-histidine + beta-alanine. The enzyme catalyses L-alanyl-L-histidine + H2O = L-histidine + L-alanine. The catalysed reaction is glycyl-L-histidine + H2O = L-histidine + glycine. It carries out the reaction L-homocarnosine + H2O = 4-aminobutanoate + L-histidine. Functionally, catalyzes the peptide bond hydrolysis in Xaa-His dipeptides, displaying the highest activity toward carnosine (beta-alanyl-L-histidine) and anserine (beta-alanyl-3-methyl-histidine). The chain is Beta-Ala-His dipeptidase (Cndp1) from Rattus norvegicus (Rat).